The primary structure comprises 138 residues: Protein A2-A3 (138 aa).

This sequence belongs to the T5likevirus A2 protein family. Interacts with A1 protein; the two proteins form heterooligomers.

In terms of biological role, involved, together with A1 protein, in the second step transfer (SST) which allows the completion of viral DNA into the host cell. The polypeptide is Protein A2-A3 (A2-A3) (Escherichia coli (Enterobacteria phage BF23)).